Consider the following 35-residue polypeptide: 5'-methylthioadenosine/S-adenosylhomocysteine nucleosidase (35 aa).

Glu-12 acts as the Proton acceptor in catalysis.

Belongs to the PNP/UDP phosphorylase family. MtnN subfamily. Homodimer.

It catalyses the reaction S-adenosyl-L-homocysteine + H2O = S-(5-deoxy-D-ribos-5-yl)-L-homocysteine + adenine. The enzyme catalyses S-methyl-5'-thioadenosine + H2O = 5-(methylsulfanyl)-D-ribose + adenine. It carries out the reaction 5'-deoxyadenosine + H2O = 5-deoxy-D-ribose + adenine. It participates in amino-acid biosynthesis; L-methionine biosynthesis via salvage pathway; S-methyl-5-thio-alpha-D-ribose 1-phosphate from S-methyl-5'-thioadenosine (hydrolase route): step 1/2. Its function is as follows. Catalyzes the irreversible cleavage of the glycosidic bond in both 5'-methylthioadenosine (MTA) and S-adenosylhomocysteine (SAH/AdoHcy) to adenine and the corresponding thioribose, 5'-methylthioribose and S-ribosylhomocysteine, respectively. Also cleaves 5'-deoxyadenosine, a toxic by-product of radical S-adenosylmethionine (SAM) enzymes, into 5-deoxyribose and adenine. Thus, is required for in vivo function of the radical SAM enzymes biotin synthase and lipoic acid synthase, that are inhibited by 5'-deoxyadenosine accumulation. This is 5'-methylthioadenosine/S-adenosylhomocysteine nucleosidase (mtnN) from Klebsiella pneumoniae.